A 529-amino-acid chain; its full sequence is Probable serine/threonine protein phosphatase 2A regulatory subunit B''epsilon (529 aa).

The tract at residues 60-110 (KSGTPTNKSKNLPSVFLSSSTPPLSPRSSSGSPRFSRQRTSPPSLHSPLRS) is disordered. Over residues 71 to 109 (LPSVFLSSSTPPLSPRSSSGSPRFSRQRTSPPSLHSPLR) the composition is skewed to low complexity. An EF-hand domain is found at 381–416 (SSEPSLEYWFKCVDLDGNGVITSNEMQFFFEEQLHR). Positions 394, 396, 398, and 405 each coordinate Ca(2+). The disordered stretch occupies residues 507-529 (EEDVDEVSNGSADVWDEPLEPPF). Acidic residues predominate over residues 520-529 (VWDEPLEPPF).

PP2A consists of a common heterodimeric core enzyme, composed of a 36 kDa catalytic subunit (subunit C) and a 65 kDa constant regulatory subunit (PR65 or subunit A), that associates with a variety of regulatory subunits. Proteins that associate with the core dimer include three families of regulatory subunits B (the R2/B/PR55/B55, R3/B''/PR72/PR130/PR59 and R5/B'/B56 families) and cell signaling molecules.

Probable regulatory subunit of type 2A protein phosphatase. The protein is Probable serine/threonine protein phosphatase 2A regulatory subunit B''epsilon (B''EPSILON) of Arabidopsis thaliana (Mouse-ear cress).